A 506-amino-acid chain; its full sequence is Anaerobic nitric oxide reductase transcription regulator NorR (506 aa).

Asp57 carries the post-translational modification 4-aspartylphosphate. Residues 187 to 416 form the Sigma-54 factor interaction domain; sequence MIGLSPAMTQ…LEHAIHRAVV (230 aa). ATP-binding positions include 215–222 and 278–287; these read GETGTGKE and ADNGTLFLDE. The segment at residues 481–500 is a DNA-binding region (H-T-H motif); it reads WAASARALETDVANLHRLAK.

It participates in nitrogen metabolism; nitric oxide reduction. Required for the expression of anaerobic nitric oxide (NO) reductase, acts as a transcriptional activator for at least the norVW operon. Activation also requires sigma-54. In Salmonella heidelberg (strain SL476), this protein is Anaerobic nitric oxide reductase transcription regulator NorR.